The sequence spans 253 residues: Peptidase inhibitor R3HDML (253 aa).

The signal sequence occupies residues 1-23 (MPLLSSIVGLTGLLLWMGHTVGA). The propeptide occupies 24 to 56 (LRMPNTTLVQGRPKNTAVWPLSGLGVPRHRRKR). Asn-28 and Asn-120 each carry an N-linked (GlcNAc...) asparagine glycan. Residues 67-207 (LDYHNHIRAS…QQAVYLVCNY (141 aa)) form the SCP domain.

Belongs to the CRISP family.

The protein resides in the secreted. In terms of biological role, putative serine protease inhibitor. This Mus musculus (Mouse) protein is Peptidase inhibitor R3HDML (R3hdml).